The primary structure comprises 125 residues: Large-conductance mechanosensitive channel (125 aa).

A run of 3 helical transmembrane segments spans residues 19–39 (VGVI…SNLI), 42–62 (LIGI…IGSA), and 67–87 (GSFL…FLMV).

The protein belongs to the MscL family. Homopentamer.

The protein resides in the cell membrane. In terms of biological role, channel that opens in response to stretch forces in the membrane lipid bilayer. May participate in the regulation of osmotic pressure changes within the cell. The sequence is that of Large-conductance mechanosensitive channel from Limosilactobacillus fermentum (strain NBRC 3956 / LMG 18251) (Lactobacillus fermentum).